The sequence spans 205 residues: Protein GrpE (205 aa).

Belongs to the GrpE family. In terms of assembly, homodimer.

The protein localises to the cytoplasm. In terms of biological role, participates actively in the response to hyperosmotic and heat shock by preventing the aggregation of stress-denatured proteins, in association with DnaK and GrpE. It is the nucleotide exchange factor for DnaK and may function as a thermosensor. Unfolded proteins bind initially to DnaJ; upon interaction with the DnaJ-bound protein, DnaK hydrolyzes its bound ATP, resulting in the formation of a stable complex. GrpE releases ADP from DnaK; ATP binding to DnaK triggers the release of the substrate protein, thus completing the reaction cycle. Several rounds of ATP-dependent interactions between DnaJ, DnaK and GrpE are required for fully efficient folding. This chain is Protein GrpE, found in Shewanella loihica (strain ATCC BAA-1088 / PV-4).